Consider the following 513-residue polypeptide: ATP synthase subunit alpha (513 aa).

Residue 169 to 176 (GDRQTGKT) coordinates ATP.

The protein belongs to the ATPase alpha/beta chains family. As to quaternary structure, F-type ATPases have 2 components, CF(1) - the catalytic core - and CF(0) - the membrane proton channel. CF(1) has five subunits: alpha(3), beta(3), gamma(1), delta(1), epsilon(1). CF(0) has three main subunits: a(1), b(2) and c(9-12). The alpha and beta chains form an alternating ring which encloses part of the gamma chain. CF(1) is attached to CF(0) by a central stalk formed by the gamma and epsilon chains, while a peripheral stalk is formed by the delta and b chains.

It is found in the cell inner membrane. It carries out the reaction ATP + H2O + 4 H(+)(in) = ADP + phosphate + 5 H(+)(out). In terms of biological role, produces ATP from ADP in the presence of a proton gradient across the membrane. The alpha chain is a regulatory subunit. This Escherichia coli O81 (strain ED1a) protein is ATP synthase subunit alpha.